We begin with the raw amino-acid sequence, 367 residues long: MYDYIIVGSGLFGAVCANELKKLNKKVLVIEKRNHIGGNAYTEDCEGIQIHKYGAHIFHTNDKYIWDYVNDLVEFNRFTNSPLAIYKDKLFNLPFNMNTFHQMWGVKDPQEAQNIINAQKKKYGDKVPENLEEQAISLVGEDLYQALIKGYTEKQWGRSAKELPAFIIKRIPVRFTFDNNYFSDRYQGIPVGGYTKLIEKMLEGVDVKLGIDFLKDKDSLASKAHRIIYTGPIDQYFDYRFGALEYRSLKFETERHEFPNFQGNAVINFTDANVPYTRIIEHKHFDYVETKHTVVTKEYPLEWKVGDEPYYPVNDNKNMELFKKYRELASREDKVIFGGRLAEYKYYDMHQVISAALYQVKNIMSTD.

Residues Phe-12, Glu-31 to Lys-32, Asn-39, and His-56 to Ile-57 each bind FAD. Phe-12 is a binding site for UDP-alpha-D-galactose. UDP-alpha-D-galactose contacts are provided by Asn-80, Thr-152, Trp-156, and Tyr-181. Asp-212–Phe-213 contacts FAD. Residues Asn-268, Arg-278, and Tyr-311 each coordinate UDP-alpha-D-galactose. Position 340 (Arg-340) interacts with FAD. Tyr-346 lines the UDP-alpha-D-galactose pocket. FAD is bound at residue Tyr-347–Val-352.

Homodimer. FAD serves as cofactor.

It catalyses the reaction UDP-alpha-D-galactose = UDP-alpha-D-galactofuranose. It functions in the pathway bacterial outer membrane biogenesis; lipopolysaccharide biosynthesis. In terms of biological role, catalyzes the interconversion through a 2-keto intermediate of uridine diphosphogalactopyranose (UDP-GalP) into uridine diphosphogalactofuranose (UDP-GalF). This is UDP-galactopyranose mutase (glf) from Escherichia coli (strain K12).